Reading from the N-terminus, the 215-residue chain is Probable phosphoglycerate mutase GpmB (215 aa).

Residues 8–15, 21–22, arginine 58, lysine 60, 82–85, 104–105, and 151–152 contribute to the substrate site; these read RHGETQWN, QG, ELDM, RR, and GI. Residue histidine 9 is the Tele-phosphohistidine intermediate of the active site. The active-site Proton donor/acceptor is the glutamate 82.

The protein belongs to the phosphoglycerate mutase family. GpmB subfamily.

The catalysed reaction is (2R)-2-phosphoglycerate = (2R)-3-phosphoglycerate. The protein operates within carbohydrate degradation; glycolysis; pyruvate from D-glyceraldehyde 3-phosphate: step 3/5. This Salmonella paratyphi C (strain RKS4594) protein is Probable phosphoglycerate mutase GpmB.